Reading from the N-terminus, the 961-residue chain is Roundabout homolog 4 (961 aa).

An N-terminal signal peptide occupies residues 1–37 (MGQGEELRAAVDSGGMGLLGTKCPLPLLLLFIMGGKA). Ig-like C2-type domains are found at residues 42 to 142 (PQIL…ARLS) and 148 to 235 (EDFR…ARVS). Cystine bridges form between C63/C125 and C169/C218. 2 N-linked (GlcNAc...) asparagine glycosylation sites follow: N211 and N257. Fibronectin type-III domains are found at residues 259-356 (TLLN…LPEQ) and 358-453 (PSAP…LEQA). Residues N371, N400, and N407 are each glycosylated (N-linked (GlcNAc...) asparagine). Low complexity predominate over residues 544-559 (SGSRDLSSSSSLSSRL). Disordered stretches follow at residues 544–563 (SGSR…GVDP) and 600–634 (QTSS…SSDS). A compositionally biased stretch (polar residues) spans 623 to 634 (TGTSSPWASSDS). N691 and N723 each carry an N-linked (GlcNAc...) asparagine glycan. Residues 726 to 810 (ELAARPLPPT…SLEEEDQDSV (85 aa)) are disordered. A compositionally biased stretch (low complexity) spans 755–769 (LQAPSSDPLPAAPLS). Positions 770–783 (VLNSSRPSSPQASF) are enriched in polar residues. N772 and N793 each carry an N-linked (GlcNAc...) asparagine glycan. A compositionally biased stretch (low complexity) spans 784–801 (LSVPSPGSSNLSSSSLSS). At S823 the chain carries Phosphoserine.

It belongs to the immunoglobulin superfamily. ROBO family. Interacts with SLIT2 and ENAH.

Functionally, receptor for Slit proteins, at least for SLIT2, and seems to be involved in angiogenesis and vascular patterning. May mediate the inhibition of primary endothelial cell migration by Slit proteins. Involved in the maintenance of endothelial barrier organization and function. The polypeptide is Roundabout homolog 4 (Robo4) (Rattus norvegicus (Rat)).